A 119-amino-acid polypeptide reads, in one-letter code: Large ribosomal subunit protein bL12 (119 aa).

The protein belongs to the bacterial ribosomal protein bL12 family. As to quaternary structure, homodimer. Part of the ribosomal stalk of the 50S ribosomal subunit. Forms a multimeric L10(L12)X complex, where L10 forms an elongated spine to which 2 to 4 L12 dimers bind in a sequential fashion. Binds GTP-bound translation factors.

Functionally, forms part of the ribosomal stalk which helps the ribosome interact with GTP-bound translation factors. Is thus essential for accurate translation. The polypeptide is Large ribosomal subunit protein bL12 (Colwellia psychrerythraea (strain 34H / ATCC BAA-681) (Vibrio psychroerythus)).